The following is a 93-amino-acid chain: Phosphoribosyl-ATP pyrophosphatase (93 aa).

This sequence belongs to the PRA-PH family.

It is found in the cytoplasm. The enzyme catalyses 1-(5-phospho-beta-D-ribosyl)-ATP + H2O = 1-(5-phospho-beta-D-ribosyl)-5'-AMP + diphosphate + H(+). The protein operates within amino-acid biosynthesis; L-histidine biosynthesis; L-histidine from 5-phospho-alpha-D-ribose 1-diphosphate: step 2/9. The sequence is that of Phosphoribosyl-ATP pyrophosphatase from Mycobacterium leprae (strain Br4923).